Consider the following 95-residue polypeptide: Selenoprotein K (95 aa).

Residues 20–42 form a helical membrane-spanning segment; sequence LSFLTDMFWGITDFVVMFFQSII. Residues 47–95 are disordered; it reads TRRGCQNSSSSTRYDDGRGPPGHPRRMGRINHGSGPSAPPMAGGGGUGR. Residue Sec-93 is a non-standard amino acid, selenocysteine.

It belongs to the selenoprotein K family.

The protein localises to the endoplasmic reticulum membrane. It is found in the cell membrane. Required for Ca(2+) flux in immune cells and plays a role in T-cell proliferation and in T-cell and neutrophil migration. Involved in endoplasmic reticulum-associated degradation (ERAD) of soluble glycosylated proteins. Required for cell surface expression of CD36 and involved in macrophage uptake of low-density lipoprotein and in foam cell formation. Required for palmitoylation. The sequence is that of Selenoprotein K (selenok) from Xenopus laevis (African clawed frog).